A 139-amino-acid chain; its full sequence is Plastocyanin (139 aa).

The first 34 residues, 1-34 (MKLIAQISRSLSLALFALVLMVGSFVAVMSPAAA), serve as a signal peptide directing secretion. Residues 35-139 (ETFTVKMGAD…GMVGKITVEG (105 aa)) form the Plastocyanin-like domain. Cu cation is bound by residues His-73, Cys-123, His-126, and Met-131.

The protein belongs to the plastocyanin family. The cofactor is Cu(2+).

Its subcellular location is the cellular thylakoid membrane. In terms of biological role, participates in electron transfer between P700 and the cytochrome b6-f complex in photosystem I. The chain is Plastocyanin (petE) from Leptolyngbya laminosa (Phormidium laminosum).